Reading from the N-terminus, the 321-residue chain is Malate dehydrogenase (321 aa).

NAD(+) is bound by residues Gly-10–Gly-15 and Asp-34. Substrate contacts are provided by Arg-83 and Arg-89. NAD(+) contacts are provided by residues Asn-96 and Ile-119–Asn-121. Substrate contacts are provided by Asn-121 and Arg-152. The active-site Proton acceptor is His-176.

This sequence belongs to the LDH/MDH superfamily. MDH type 3 family.

It carries out the reaction (S)-malate + NAD(+) = oxaloacetate + NADH + H(+). Functionally, catalyzes the reversible oxidation of malate to oxaloacetate. The polypeptide is Malate dehydrogenase (Sinorhizobium fredii (strain NBRC 101917 / NGR234)).